The following is a 544-amino-acid chain: Chaperonin GroEL (544 aa).

Residues 30–33 (TLGP), 87–91 (DGTTT), Gly-414, 478–480 (NAL), and Asp-494 contribute to the ATP site.

It belongs to the chaperonin (HSP60) family. In terms of assembly, forms a cylinder of 14 subunits composed of two heptameric rings stacked back-to-back. Interacts with the co-chaperonin GroES.

It localises to the cytoplasm. The catalysed reaction is ATP + H2O + a folded polypeptide = ADP + phosphate + an unfolded polypeptide.. Together with its co-chaperonin GroES, plays an essential role in assisting protein folding. The GroEL-GroES system forms a nano-cage that allows encapsulation of the non-native substrate proteins and provides a physical environment optimized to promote and accelerate protein folding. The sequence is that of Chaperonin GroEL from Pelotomaculum thermopropionicum (strain DSM 13744 / JCM 10971 / SI).